A 383-amino-acid polypeptide reads, in one-letter code: Thioredoxin reductase 2 (383 aa).

FAD contacts are provided by residues 66–69 (SGPA), 87–88 (FE), 95–100 (IAPGGQ), Asn-109, Val-142, Cys-200, Asp-345, and 352–354 (RQA). Cysteines 197 and 200 form a disulfide.

The protein belongs to the class-II pyridine nucleotide-disulfide oxidoreductase family. As to quaternary structure, homodimer. It depends on FAD as a cofactor.

The protein localises to the cytoplasm. It localises to the mitochondrion matrix. The enzyme catalyses [thioredoxin]-dithiol + NADP(+) = [thioredoxin]-disulfide + NADPH + H(+). Possesses thioredoxin-disulfide reductase activity towards thioredoxins O1, O2 and F3. The protein is Thioredoxin reductase 2 (NTR2) of Arabidopsis thaliana (Mouse-ear cress).